Here is a 200-residue protein sequence, read N- to C-terminus: Potassium-transporting ATPase KdpC subunit (200 aa).

Residues 7–27 form a helical membrane-spanning segment; it reads PALVMIVLFTILTGLIYPLAM.

This sequence belongs to the KdpC family. As to quaternary structure, the system is composed of three essential subunits: KdpA, KdpB and KdpC.

Its subcellular location is the cell inner membrane. Its function is as follows. Part of the high-affinity ATP-driven potassium transport (or Kdp) system, which catalyzes the hydrolysis of ATP coupled with the electrogenic transport of potassium into the cytoplasm. This subunit acts as a catalytic chaperone that increases the ATP-binding affinity of the ATP-hydrolyzing subunit KdpB by the formation of a transient KdpB/KdpC/ATP ternary complex. The protein is Potassium-transporting ATPase KdpC subunit of Methylocella silvestris (strain DSM 15510 / CIP 108128 / LMG 27833 / NCIMB 13906 / BL2).